The chain runs to 537 residues: Chaperonin GroEL 2 (537 aa).

ATP is bound by residues 29–32 (TLGP), 86–90 (DGTTT), Gly-413, 477–479 (NAA), and Asp-493.

This sequence belongs to the chaperonin (HSP60) family. Forms a cylinder of 14 subunits composed of two heptameric rings stacked back-to-back. Interacts with the co-chaperonin GroES.

Its subcellular location is the cytoplasm. The enzyme catalyses ATP + H2O + a folded polypeptide = ADP + phosphate + an unfolded polypeptide.. Together with its co-chaperonin GroES, plays an essential role in assisting protein folding. The GroEL-GroES system forms a nano-cage that allows encapsulation of the non-native substrate proteins and provides a physical environment optimized to promote and accelerate protein folding. This is Chaperonin GroEL 2 from Rhodococcus jostii (strain RHA1).